We begin with the raw amino-acid sequence, 414 residues long: uncharacterized protein (414 aa).

The region spanning 246 to 360 is the Nop domain; it reads EAPNITKLAG…LNKRVEEIRR (115 aa). The interval 358–414 is disordered; it reads IRRKYPKPPKKKKKEKPKAKKKEKKGKKEKSKKKKDKKKDKKGKKERKVIGKTKSRK. Positions 361 to 414 are enriched in basic residues; sequence KYPKPPKKKKKEKPKAKKKEKKGKKEKSKKKKDKKKDKKGKKERKVIGKTKSRK.

It belongs to the NOP5/NOP56 family.

This is an uncharacterized protein from Methanocaldococcus jannaschii (strain ATCC 43067 / DSM 2661 / JAL-1 / JCM 10045 / NBRC 100440) (Methanococcus jannaschii).